We begin with the raw amino-acid sequence, 292 residues long: ATP synthase gamma chain (292 aa).

It belongs to the ATPase gamma chain family. In terms of assembly, F-type ATPases have 2 components, CF(1) - the catalytic core - and CF(0) - the membrane proton channel. CF(1) has five subunits: alpha(3), beta(3), gamma(1), delta(1), epsilon(1). CF(0) has three main subunits: a, b and c.

It localises to the cell inner membrane. Functionally, produces ATP from ADP in the presence of a proton gradient across the membrane. The gamma chain is believed to be important in regulating ATPase activity and the flow of protons through the CF(0) complex. This Methylobacterium sp. (strain 4-46) protein is ATP synthase gamma chain.